Reading from the N-terminus, the 1113-residue chain is uncharacterized protein (1113 aa).

313–320 provides a ligand contact to ATP; sequence GPPGTGKS.

The protein belongs to the DNA2/NAM7 helicase family.

This is an uncharacterized protein from Mycoplasma pneumoniae (strain ATCC 29342 / M129 / Subtype 1) (Mycoplasmoides pneumoniae).